Reading from the N-terminus, the 116-residue chain is Small ribosomal subunit protein bS16 (116 aa).

It belongs to the bacterial ribosomal protein bS16 family.

This chain is Small ribosomal subunit protein bS16, found in Chlamydia muridarum (strain MoPn / Nigg).